We begin with the raw amino-acid sequence, 186 residues long: C-type lectin 37Da (186 aa).

A signal peptide spans 1–20 (MLKTLVQLFLVVAGFAPGFG). N-linked (GlcNAc...) asparagine glycosylation is found at Asn35 and Asn47. The region spanning 46-169 (INESYYVFGQ…CHNHASSLFK (124 aa)) is the C-type lectin domain. Cys140 and Cys160 form a disulfide bridge.

The protein resides in the secreted. Its function is as follows. Galactose-specific lectin that displays calcium-dependent activity. Binds to the surface of hemocytes and enhances hemocyte encapsulation and melanization. This is likely by interacting with carbohydrates on the surface of the hemocytes. Also displays agglutination activity against the Gram-negative bacterium E.coli. This chain is C-type lectin 37Da, found in Drosophila melanogaster (Fruit fly).